Consider the following 386-residue polypeptide: L-arabinitol 4-dehydrogenase (386 aa).

The Zn(2+) site is built by Cys55, His80, Glu81, Cys110, Cys113, Cys116, Cys124, and Glu165. NAD(+)-binding positions include 192-193, Asp213, Arg218, Ile293, and 317-319; these read PI and QYR.

Belongs to the zinc-containing alcohol dehydrogenase family. As to quaternary structure, homotetramer. Zn(2+) serves as cofactor.

The catalysed reaction is L-arabinitol + NAD(+) = L-xylulose + NADH + H(+). The protein operates within carbohydrate degradation; L-arabinose degradation via L-arabinitol; D-xylulose 5-phosphate from L-arabinose (fungal route): step 2/5. In terms of biological role, catalyzes the NAD-dependent oxidation of L-arabinitol to L-xylulose in the fungal L-arabinose catabolic pathway. L-arabinose catabolism is important for using plant material as a carbon source. Not active with NADP as cosubstrate. This is L-arabinitol 4-dehydrogenase (ladA) from Aspergillus niger (strain ATCC MYA-4892 / CBS 513.88 / FGSC A1513).